The primary structure comprises 108 residues: uncharacterized protein (108 aa).

A run of 2 helical transmembrane segments spans residues 5–27 (TVYG…QLEI) and 83–105 (IFLM…LNIF).

The protein resides in the membrane. This is an uncharacterized protein from Schizosaccharomyces pombe (strain 972 / ATCC 24843) (Fission yeast).